The chain runs to 569 residues: Probable protein phosphatase 2C BIPP2C1 (569 aa).

Disordered regions lie at residues 166 to 212 and 251 to 279; these read GSSN…SSKV and SLDDSEASDGSTTQDFDTDVETESSGSSI. Over residues 174 to 183 the composition is skewed to low complexity; sequence SEVGVESECG. The region spanning 329–564 is the PPM-type phosphatase domain; the sequence is AAMLPHPSKV…DDVTVVVSVV (236 aa). Residues Asp358, Gly359, Asp488, and Asp555 each coordinate Mn(2+).

It belongs to the PP2C family. Mg(2+) serves as cofactor. It depends on Mn(2+) as a cofactor.

It catalyses the reaction O-phospho-L-seryl-[protein] + H2O = L-seryl-[protein] + phosphate. The enzyme catalyses O-phospho-L-threonyl-[protein] + H2O = L-threonyl-[protein] + phosphate. Functionally, may play a role in responses to biotic and abiotic stresses. In Oryza sativa subsp. indica (Rice), this protein is Probable protein phosphatase 2C BIPP2C1 (BIPP2C1).